Consider the following 464-residue polypeptide: JmjC domain-containing protein 1 (464 aa).

Residues leucine 182–tyrosine 349 enclose the JmjC domain.

In Schizosaccharomyces pombe (strain 972 / ATCC 24843) (Fission yeast), this protein is JmjC domain-containing protein 1 (jmj1).